A 1203-amino-acid chain; its full sequence is Partitioning defective 3 homolog B (1203 aa).

Disordered regions lie at residues 79-104 and 138-162; these read FDEQEPLQKTESPGGNPADRQSPDAF and RRSSDPAPGPHADAQPSTASLSGQS. Phosphoserine is present on S100. Residues 152–162 are compositionally biased toward polar residues; it reads QPSTASLSGQS. The 89-residue stretch at 201-289 folds into the PDZ 1 domain; it reads TRAVEISGEG…SPSVILHVLL (89 aa). The segment at 334-374 is disordered; it reads TRASSPEGEEPASPQQSKSPRVPRLGRKPSSPSLSPLMGFG. Phosphoserine is present on residues S346, S352, and S368. PDZ domains lie at 383–468 and 496–585; these read KIDL…VIAR and TLEI…GMIQ. S635, S710, S728, S730, S746, S749, and S801 each carry phosphoserine. Residues 718–732 are compositionally biased toward basic and acidic residues; that stretch reads GKVQSLADRRSDSPG. The disordered stretch occupies residues 718 to 743; sequence GKVQSLADRRSDSPGKDFGPTLGLKK. 3 disordered regions span residues 787-927, 968-994, and 1050-1203; these read KSYD…EKQA, VFRSPSPLRAGPLAYPRDGRPLSPDHL, and RPSD…TAAV. Residue T810 is modified to Phosphothreonine. Over residues 827 to 842 the composition is skewed to basic and acidic residues; that stretch reads VENKAKNIKKTKEKEK. Positions 843–854 are enriched in basic residues; that stretch reads KKGKGKLKVKEK. Basic and acidic residues-rich tracts occupy residues 855-865, 881-893, 906-927, and 984-994; these read KLKEEHEDAER, KKDDKVGKAEQKG, ERMKEERERIGAKHQELREKQA, and RDGRPLSPDHL. 2 positions are modified to phosphoserine: S1088 and S1182.

The protein belongs to the PAR3 family. Interacts with PARD6B. Interacts with INSC/inscuteable.

The protein localises to the endomembrane system. Its subcellular location is the cell junction. It is found in the tight junction. Its function is as follows. Putative adapter protein involved in asymmetrical cell division and cell polarization processes. May play a role in the formation of epithelial tight junctions. In Mus musculus (Mouse), this protein is Partitioning defective 3 homolog B (Pard3b).